We begin with the raw amino-acid sequence, 262 residues long: Ribose-5-phosphate isomerase A (262 aa).

Residues 33–36 (TGST), 89–92 (DGAD), and 102–105 (KGGG) each bind substrate. Glu-111 (proton acceptor) is an active-site residue. Lys-129 is a binding site for substrate.

Belongs to the ribose 5-phosphate isomerase family. Homodimer.

The enzyme catalyses aldehydo-D-ribose 5-phosphate = D-ribulose 5-phosphate. Its pathway is carbohydrate degradation; pentose phosphate pathway; D-ribose 5-phosphate from D-ribulose 5-phosphate (non-oxidative stage): step 1/1. In terms of biological role, catalyzes the reversible conversion of ribose-5-phosphate to ribulose 5-phosphate. The sequence is that of Ribose-5-phosphate isomerase A from Cereibacter sphaeroides (strain ATCC 17029 / ATH 2.4.9) (Rhodobacter sphaeroides).